Here is a 171-residue protein sequence, read N- to C-terminus: Adenine phosphoribosyltransferase (171 aa).

It belongs to the purine/pyrimidine phosphoribosyltransferase family. As to quaternary structure, homodimer.

The protein localises to the cytoplasm. The enzyme catalyses AMP + diphosphate = 5-phospho-alpha-D-ribose 1-diphosphate + adenine. The protein operates within purine metabolism; AMP biosynthesis via salvage pathway; AMP from adenine: step 1/1. Its function is as follows. Catalyzes a salvage reaction resulting in the formation of AMP, that is energically less costly than de novo synthesis. This Geotalea daltonii (strain DSM 22248 / JCM 15807 / FRC-32) (Geobacter daltonii) protein is Adenine phosphoribosyltransferase.